We begin with the raw amino-acid sequence, 1120 residues long: Transcriptional repressor NF-X1 (1120 aa).

The segment at 9 to 26 is interaction with PABPC1 and PABC4; sequence GTFKFNTDAAEFIPQEKK. A disordered region spans residues 22 to 295; the sequence is PQEKKNSGLN…LNERPAKSTC (274 aa). 3 positions are modified to phosphoserine: Ser50, Ser82, and Ser95. Positions 73–106 are enriched in polar residues; sequence YHPSGSKPKSQQTSFQSSPCNKSPKSHGLQNQPW. Residues 111–120 show a composition bias toward basic residues; the sequence is NEKHHIRVKK. The span at 124–141 shows a compositional bias: polar residues; sequence LAEQTSDTAGLESSTRSE. Ser129 and Ser150 each carry phosphoserine. Basic and acidic residues-rich tracts occupy residues 142-159, 188-202, 222-254, and 282-291; these read SGTDLREHSPSESEKEVV, LKCEWSNRTTPKPED, SSRKGVLDGYGARRNEQRRYPQKRPPWEVEGAR, and PKDDLNERPA. Ser326 is subject to Phosphoserine. An RING-type; atypical zinc finger spans residues 358–409; sequence CMVCCELVRVTAPVWSCQSCYHVFHLNCIKKWARSPASQADGQSGWRCPACQ. 8 consecutive NF-X1-type zinc fingers follow at residues 453–471, 506–525, 567–586, 632–655, 694–713, 721–740, 832–854, and 863–884; these read CPHSCNLLCHPGPCPPCPA, CGQHQCAELCHGGQCQPCQI, CGNHTCSQVCHPQPCQQCPR, CGSLDFIHTCEKLCHEGDCGPCSR, CGRHKCNEICCVDKEHKCPL, CGLHRCEEPCHRGNCQTCWQ, CGMHKCQRLCHKGECLVDEPCKQ, and CGHPCMAPCHTSSPCPVTACKA. An R3H domain is found at 994–1062; that stretch reads LKFVSDVEKE…KRNVVVTAIR (69 aa). The tract at residues 1081-1109 is disordered; sequence QARPPPPIPHHRHQSDKNPGSSNLQKITK. The segment covering 1097 to 1106 has biased composition (polar residues); the sequence is KNPGSSNLQK.

It belongs to the NFX1 family. Isoform 1 interacts with PABPC1 and PABPC4. As to quaternary structure, (Microbial infection) Isoform 1 and isoform 3 interact with human papillomavirus (HPV) type-16 E6 oncoprotein. In terms of processing, isoform 3 is polyubiquitinated in the presence of HPV16 E6 protein; which leads to proteasomal degradation. Isoform 1 is not polyubiquitinated.

It localises to the nucleus. In terms of biological role, binds to the X-box motif of MHC class II genes and represses their expression. May play an important role in regulating the duration of an inflammatory response by limiting the period in which MHC class II molecules are induced by interferon-gamma. Isoform 3 binds to the X-box motif of TERT promoter and represses its expression. Together with PABPC1 or PABPC4, isoform 1 acts as a coactivator for TERT expression. Mediates E2-dependent ubiquitination. In Homo sapiens (Human), this protein is Transcriptional repressor NF-X1 (NFX1).